A 203-amino-acid polypeptide reads, in one-letter code: Putative 3-methyladenine DNA glycosylase (203 aa).

Belongs to the DNA glycosylase MPG family.

The sequence is that of Putative 3-methyladenine DNA glycosylase from Clostridium botulinum (strain ATCC 19397 / Type A).